Here is a 743-residue protein sequence, read N- to C-terminus: 1,4-alpha-glucan branching enzyme GlgB (743 aa).

Catalysis depends on aspartate 416, which acts as the Nucleophile. Glutamate 469 serves as the catalytic Proton donor.

Belongs to the glycosyl hydrolase 13 family. GlgB subfamily. Monomer.

It carries out the reaction Transfers a segment of a (1-&gt;4)-alpha-D-glucan chain to a primary hydroxy group in a similar glucan chain.. The protein operates within glycan biosynthesis; glycogen biosynthesis. Functionally, catalyzes the formation of the alpha-1,6-glucosidic linkages in glycogen by scission of a 1,4-alpha-linked oligosaccharide from growing alpha-1,4-glucan chains and the subsequent attachment of the oligosaccharide to the alpha-1,6 position. The polypeptide is 1,4-alpha-glucan branching enzyme GlgB (Shewanella baltica (strain OS155 / ATCC BAA-1091)).